Here is a 273-residue protein sequence, read N- to C-terminus: Putative pyruvate, phosphate dikinase regulatory protein 2 (273 aa).

151–158 (GISRTSKT) is an ADP binding site.

It belongs to the pyruvate, phosphate/water dikinase regulatory protein family. PDRP subfamily.

The enzyme catalyses N(tele)-phospho-L-histidyl/L-threonyl-[pyruvate, phosphate dikinase] + ADP = N(tele)-phospho-L-histidyl/O-phospho-L-threonyl-[pyruvate, phosphate dikinase] + AMP + H(+). The catalysed reaction is N(tele)-phospho-L-histidyl/O-phospho-L-threonyl-[pyruvate, phosphate dikinase] + phosphate + H(+) = N(tele)-phospho-L-histidyl/L-threonyl-[pyruvate, phosphate dikinase] + diphosphate. Functionally, bifunctional serine/threonine kinase and phosphorylase involved in the regulation of the pyruvate, phosphate dikinase (PPDK) by catalyzing its phosphorylation/dephosphorylation. This chain is Putative pyruvate, phosphate dikinase regulatory protein 2, found in Staphylococcus saprophyticus subsp. saprophyticus (strain ATCC 15305 / DSM 20229 / NCIMB 8711 / NCTC 7292 / S-41).